The following is a 602-amino-acid chain: Elongation factor 4 (602 aa).

In terms of domain architecture, tr-type G spans Ser7–Ala189. Residues Asp19–Thr24 and Asn136–Asp139 each bind GTP.

Belongs to the TRAFAC class translation factor GTPase superfamily. Classic translation factor GTPase family. LepA subfamily.

It localises to the cell inner membrane. It carries out the reaction GTP + H2O = GDP + phosphate + H(+). Its function is as follows. Required for accurate and efficient protein synthesis under certain stress conditions. May act as a fidelity factor of the translation reaction, by catalyzing a one-codon backward translocation of tRNAs on improperly translocated ribosomes. Back-translocation proceeds from a post-translocation (POST) complex to a pre-translocation (PRE) complex, thus giving elongation factor G a second chance to translocate the tRNAs correctly. Binds to ribosomes in a GTP-dependent manner. This is Elongation factor 4 from Synechococcus sp. (strain CC9902).